Reading from the N-terminus, the 333-residue chain is MARHSFFCIDGHTCGNPVRLVAGGGPNLQGANMIEKRAHFLAEYDWIRTGLMFEPRGHDMMSGSILYPPTRPDCDVAILFIETSGCLPMCGHGTIGTVTMAIEHGLVTPKIPGVLMLDTPAGVVKAEYRQEGQYVEEVRITNVPAFLYARGLTAECPGLGEVMVDVAYGGNFYAIVEPQEHFRDMADFTAGELIGMSGALRKALNAKYEFVHPEKPEIRGLSHILWTGAPKHAEAHARNAVFYGDKAIDRSPCGTGTSARIAHWAANGKLKVGDDFVHESIIGSLFKGRVEATARVGNVDAIIPSIGGWARMTGYNTIFIDDRDPFAHGFVVV.

Cysteine 90 acts as the Proton acceptor in catalysis. Residues 91-92, histidine 223, and aspartate 249 each bind substrate; that span reads GH. Catalysis depends on cysteine 253, which acts as the Proton donor. 254–255 serves as a coordination point for substrate; sequence GT.

This sequence belongs to the proline racemase family.

The catalysed reaction is trans-4-hydroxy-L-proline = cis-4-hydroxy-D-proline. Functionally, catalyzes the epimerization of trans-4-hydroxy-L-proline (t4LHyp) to cis-4-hydroxy-D-proline (c4DHyp). May be involved in a degradation pathway of t4LHyp, which would allow S.novella to grow on t4LHyp as a sole carbon source. This chain is 4-hydroxyproline 2-epimerase, found in Ancylobacter novellus (strain ATCC 8093 / DSM 506 / JCM 20403 / CCM 1077 / IAM 12100 / NBRC 12443 / NCIMB 10456) (Starkeya novella).